A 64-amino-acid chain; its full sequence is Large ribosomal subunit protein bL35 (64 aa).

Residues 1-10 (MPKMKTNSAA) show a composition bias toward polar residues. Positions 1 to 64 (MPKMKTNSAA…SKNMKKLLGR (64 aa)) are disordered.

Belongs to the bacterial ribosomal protein bL35 family.

The protein is Large ribosomal subunit protein bL35 of Bifidobacterium adolescentis (strain ATCC 15703 / DSM 20083 / NCTC 11814 / E194a).